A 276-amino-acid polypeptide reads, in one-letter code: ATP synthase subunit a 2 (276 aa).

A run of 5 helical transmembrane segments spans residues 45 to 65 (AVHV…VWLF), 105 to 125 (VIAP…LMDL), 154 to 173 (VNVT…YYSI), 226 to 246 (LLFI…SVPW), and 247 to 267 (AIFH…LTIV).

The protein belongs to the ATPase A chain family. As to quaternary structure, F-type ATPases have 2 components, CF(1) - the catalytic core - and CF(0) - the membrane proton channel. CF(1) has five subunits: alpha(3), beta(3), gamma(1), delta(1), epsilon(1). CF(0) has three main subunits: a(1), b(2) and c(9-12). The alpha and beta chains form an alternating ring which encloses part of the gamma chain. CF(1) is attached to CF(0) by a central stalk formed by the gamma and epsilon chains, while a peripheral stalk is formed by the delta and b chains.

The protein resides in the cell inner membrane. In terms of biological role, key component of the proton channel; it plays a direct role in the translocation of protons across the membrane. This is ATP synthase subunit a 2 from Hahella chejuensis (strain KCTC 2396).